The primary structure comprises 208 residues: FMN-dependent NADH:quinone oxidoreductase (208 aa).

FMN is bound by residues S9 and 15 to 17; that span reads SHS.

Belongs to the azoreductase type 1 family. Homodimer. The cofactor is FMN.

It carries out the reaction 2 a quinone + NADH + H(+) = 2 a 1,4-benzosemiquinone + NAD(+). It catalyses the reaction N,N-dimethyl-1,4-phenylenediamine + anthranilate + 2 NAD(+) = 2-(4-dimethylaminophenyl)diazenylbenzoate + 2 NADH + 2 H(+). Functionally, quinone reductase that provides resistance to thiol-specific stress caused by electrophilic quinones. Also exhibits azoreductase activity. Catalyzes the reductive cleavage of the azo bond in aromatic azo compounds to the corresponding amines. This Bordetella petrii (strain ATCC BAA-461 / DSM 12804 / CCUG 43448) protein is FMN-dependent NADH:quinone oxidoreductase.